A 299-amino-acid polypeptide reads, in one-letter code: Ribosome-inactivating protein saporin-6 (299 aa).

An N-terminal signal peptide occupies residues 1-24 (MKIYVVATIAWILLQFSAWTTTDA). Glu200 is an active-site residue. Residues 278 to 299 (SSNEANSTVRHYGPLKPTLLIT) constitute a propeptide that is removed on maturation. An N-linked (GlcNAc...) asparagine glycan is attached at Asn283.

Belongs to the ribosome-inactivating protein family. Type 1 RIP subfamily. As to expression, seeds and leaves of the plant.

It catalyses the reaction Endohydrolysis of the N-glycosidic bond at one specific adenosine on the 28S rRNA.. In terms of biological role, ribosome-inactivating protein of type 1, inhibits protein synthesis in animal cells. Useful as immunotoxin for pharmacological applications. This Saponaria officinalis (Common soapwort) protein is Ribosome-inactivating protein saporin-6 (SAP6).